Consider the following 535-residue polypeptide: MTIDHEVKRRRTFAIISHPDAGKTTLTEKLLLFAGAIHIAGSVKARKASRHATSDWMEIEKQRGISVASSVMQMEYRGCVINLLDTPGHQDFSEDTYRVLTAVDAALMVIDAANGVESQTLRLLQVCRARNTPIITFVNKLDREVREPLDLIDEIERTLGMDVVPFTWPVGSGKRFHGVYDLRHELMRVFRPGMDHAEQKDTTIITDLGDPAVTKRFGANLEQARQEIDLIKGAAPEFDQAAFLAGQQTPVFFGSAINNFGVQEVLDTLVDLAPPPGTRKAIQREILPTENKFSGVVFKIQANMNPAHRDRIAFVRICSGEFRRGMSLKVVRSGKDVRTSTVVSFLSQRRELLETAYAGDIIGIPNHGTLQLADTLTEGDNLQFTGLPFFAPEIFQTVEIADPLRSKQLKLGLTQLGEEGAIQVFRPHLGSILLLGAVGQLQFEVVTHRLKHEYGVEARVAPAKYQLARWVTAEMPRELQRFIDANTHRIAYDAVDAPTFLASFSAEISVAEENWPGIRFHKMREHAGLLFQTAS.

The region spanning 8–277 (KRRRTFAIIS…TLVDLAPPPG (270 aa)) is the tr-type G domain. GTP-binding positions include 17–24 (SHPDAGKT), 85–89 (DTPGH), and 139–142 (NKLD).

The protein belongs to the TRAFAC class translation factor GTPase superfamily. Classic translation factor GTPase family. PrfC subfamily.

It localises to the cytoplasm. Its function is as follows. Increases the formation of ribosomal termination complexes and stimulates activities of RF-1 and RF-2. It binds guanine nucleotides and has strong preference for UGA stop codons. It may interact directly with the ribosome. The stimulation of RF-1 and RF-2 is significantly reduced by GTP and GDP, but not by GMP. This Nitrosomonas eutropha (strain DSM 101675 / C91 / Nm57) protein is Peptide chain release factor 3.